Consider the following 29-residue polypeptide: uncharacterized protein (29 aa).

A disordered region spans residues methionine 1–glycine 29.

This is an uncharacterized protein from Saccharomyces cerevisiae (strain ATCC 204508 / S288c) (Baker's yeast).